The primary structure comprises 231 residues: NADH-ubiquinone oxidoreductase chain 4 (231 aa).

Transmembrane regions (helical) follow at residues 1–21 (PIAG…YGII), 34–54 (TFLP…LTCL), 61–80 (SLIA…AIII), 84–106 (WGLS…LFCL), 118–138 (ILIL…WWLL), and 156–178 (LLIM…LSML).

This sequence belongs to the complex I subunit 4 family.

It localises to the mitochondrion membrane. The catalysed reaction is a ubiquinone + NADH + 5 H(+)(in) = a ubiquinol + NAD(+) + 4 H(+)(out). Core subunit of the mitochondrial membrane respiratory chain NADH dehydrogenase (Complex I) that is believed to belong to the minimal assembly required for catalysis. Complex I functions in the transfer of electrons from NADH to the respiratory chain. The immediate electron acceptor for the enzyme is believed to be ubiquinone. The sequence is that of NADH-ubiquinone oxidoreductase chain 4 (MT-ND4) from Trimeresurus albolabris (White-lipped pit viper).